Reading from the N-terminus, the 449-residue chain is VIRF-1 (449 aa).

Residues 1–60 (MDPGQRPNPFGAPGAIPKKPCLSQGSPGTSGSGAPCDEPSRSESPGEGPSGTGGSAAAGD) form a disordered region. A DNA-binding region (IRF tryptophan pentad repeat) is located at residues 89–195 (KASIKDWIVC…HHFLVFRVRK (107 aa)). An N6-propionyllysine; by host mark is found at Lys406 and Lys442.

It belongs to the IRF family. Forms homodimers. Interacts with host IRF3, IRF7, and CREBBP. Interacts with host SYNCRIP. Interacts with host USP7. Interacts (via C-terminus) with host HERC5. Interacts with host GABARAPL1. Interacts with host SIRT6. In terms of processing, ISGylated. Propionylated in lysine residues Lys-406 and Lys-442, which is required for effective inhibition of IFN-beta production and antiviral signaling.

It is found in the host cytoplasm. Plays a role in the inhibition of host innate response by repressing the expression of interferon-inducible genes and blocking host IRF1- and IRF3-mediated transcription. Blocks the interaction between host IRF3 and CREBBP. Regulates the host cellular metabolism by increasing glucose uptake, ATP production and lactate secretion through down-regulation of heterogeneous nuclear ribonuclear protein Q1/SYNCRIP. Mechanistically, induces ubiquitination and degradation of SYNCRIP through the ubiquitin-proteasome pathway by recruiting KLHL3/CUL3 ubiquitin ligase complex. Disrupts host TP53 signaling pathway during viral infection by interacting with host USP7 and thereby decreasing the availability of USP7 for deubiquitinating and stabilizing TP53. Plays a role in the global inhibition of protein ISGylation by interacting with host HERC5 leading to its inhibition. Promotes its own propionylation by blocking SIRT6 interaction with ubiquitin-specific peptidase 10/USP10 leading to SIRT6 degradation via a ubiquitin-proteasome pathway. In turn, propionylation is required to block IRF3-CBP/p300 recruitment and to repress the STING DNA sensing pathway. Plays a role in the activation of mitophagy during infection via interaction with the host proteins NIX/BNIP3L, TUFM and GABARAPL1 thereby inhibiting antiviral responses and contributing to productive replication. The protein is VIRF-1 (vIRF-1) of Homo sapiens (Human).